The chain runs to 691 residues: NADH-ubiquinone oxidoreductase 75 kDa subunit (691 aa).

Positions 1 to 78 (MVNVFVDGLS…NMKIFTNTPL (78 aa)) constitute a 2Fe-2S ferredoxin-type domain. Residues cysteine 34, cysteine 45, cysteine 48, and cysteine 62 each coordinate [2Fe-2S] cluster. One can recognise a 4Fe-4S His(Cys)3-ligated-type domain in the interval 78–117 (LVKKAREGVLEFLLVNHPLDCPICDQGGECDLQDLTMVYG). [4Fe-4S] cluster is bound by residues histidine 94, cysteine 98, cysteine 101, cysteine 107, cysteine 146, cysteine 149, cysteine 152, and cysteine 196. In terms of domain architecture, 4Fe-4S Mo/W bis-MGD-type spans 215–271 (LQSTESIDVSDAIGSNIRIDVRGSEIMRILPRLNEDVNEEWISDKARFCYDGLKRQR).

It belongs to the complex I 75 kDa subunit family. Complex I is composed of about 30 different subunits. [2Fe-2S] cluster is required as a cofactor. [4Fe-4S] cluster serves as cofactor.

The protein resides in the mitochondrion inner membrane. The catalysed reaction is a ubiquinone + NADH + 5 H(+)(in) = a ubiquinol + NAD(+) + 4 H(+)(out). Core subunit of the mitochondrial membrane respiratory chain NADH dehydrogenase (Complex I) that is believed to belong to the minimal assembly required for catalysis. Complex I functions in the transfer of electrons from NADH to the respiratory chain. The immediate electron acceptor for the enzyme is believed to be ubiquinone. This is the largest subunit of complex I and it is a component of the iron-sulfur (IP) fragment of the enzyme. It may form part of the active site crevice where NADH is oxidized. The polypeptide is NADH-ubiquinone oxidoreductase 75 kDa subunit (NAD11) (Reclinomonas americana).